The following is a 753-amino-acid chain: Taperin (753 aa).

The tract at residues 141 to 348 (FDSPAAPRRR…IRPSSKPDME (208 aa)) is disordered. The span at 182-197 (PAPPVLPSQPAPPISP) shows a compositional bias: pro residues. Composition is skewed to polar residues over residues 230–239 (LQKTGSNSFT) and 250–263 (VNRSLSNGPMTQES). Position 274 is a phosphoserine (Ser-274). Over residues 300 to 322 (TPSATPVGPPAFLAPSPASATPS) the composition is skewed to low complexity. Polar residues predominate over residues 323–335 (QRQWVSSATSAND). The segment covering 337–347 (FEIRPSSKPDM) has biased composition (basic and acidic residues). Phosphoserine is present on residues Ser-402, Ser-458, and Ser-502. The segment at 438 to 488 (GCPRPAISDTDKSVRRQRPASPPPFLPATTEAEPAEGLGVPGLTKNGQEPV) is disordered. Disordered regions lie at residues 544–583 (FTVVPKRKPGTLQEPHLSQTNGQFQQGAEEQDADSLSGPH) and 637–676 (FEYPSESSLAQEEAEEEEEEEEEEEGEDGEEEEVGPDSEK). Positions 559–571 (HLSQTNGQFQQGA) are enriched in polar residues. Residues 648 to 672 (EEAEEEEEEEEEEEGEDGEEEEVGP) are compositionally biased toward acidic residues.

Belongs to the taperin family. As to quaternary structure, interacts with GRXCR2; the interaction restricts TPRN to the stereocilum basal region. Interacts with actin ACTB; the interaction may stabilize stereocilia. Interacts with CLIC5. Interacts with PTPRQ. TPRN, CLIC5 and PTPQR form concentric rings at the base of stereocilia and may form a complex. Interacts with phosphatase PPP1CA; the interaction results in inhibition of PPC1A phosphatase activity. Interacts with DNA damage response proteins XRCC6/KU70, XRCC5/KU80, PARP1, TOP1 and TOP2A; these interactions recruit TPRN to sites of DNA damage where it may play a role in DNA repair.

Its subcellular location is the cell projection. It is found in the stereocilium. It localises to the microvillus. The protein resides in the nucleus. The protein localises to the nucleoplasm. Its subcellular location is the cytoplasm. Functionally, essential for hearing. Required for maintenance of stereocilia on both inner and outer hair cells. Necessary for the integrity of the stereociliary rootlet. May act as an actin cytoskeleton regulator involved in the regulation of actin dynamics at the pointed end in hair cells. Forms rings at the base of stereocilia and binds actin filaments in the stereocilia which may stabilize the stereocilia. Acts as a strong inhibitor of PPP1CA phosphatase activity. Recruited to sites of DNA damage and may play a role in DNA damage repair. The sequence is that of Taperin (Tprn) from Rattus norvegicus (Rat).